Consider the following 357-residue polypeptide: UDP-N-acetylglucosamine--N-acetylmuramyl-(pentapeptide) pyrophosphoryl-undecaprenol N-acetylglucosamine transferase (357 aa).

UDP-N-acetyl-alpha-D-glucosamine-binding positions include 14–16 (TGG), N120, R164, S194, and Q291.

It belongs to the glycosyltransferase 28 family. MurG subfamily.

Its subcellular location is the cell inner membrane. It catalyses the reaction di-trans,octa-cis-undecaprenyl diphospho-N-acetyl-alpha-D-muramoyl-L-alanyl-D-glutamyl-meso-2,6-diaminopimeloyl-D-alanyl-D-alanine + UDP-N-acetyl-alpha-D-glucosamine = di-trans,octa-cis-undecaprenyl diphospho-[N-acetyl-alpha-D-glucosaminyl-(1-&gt;4)]-N-acetyl-alpha-D-muramoyl-L-alanyl-D-glutamyl-meso-2,6-diaminopimeloyl-D-alanyl-D-alanine + UDP + H(+). Its pathway is cell wall biogenesis; peptidoglycan biosynthesis. Its function is as follows. Cell wall formation. Catalyzes the transfer of a GlcNAc subunit on undecaprenyl-pyrophosphoryl-MurNAc-pentapeptide (lipid intermediate I) to form undecaprenyl-pyrophosphoryl-MurNAc-(pentapeptide)GlcNAc (lipid intermediate II). In Fusobacterium nucleatum subsp. nucleatum (strain ATCC 25586 / DSM 15643 / BCRC 10681 / CIP 101130 / JCM 8532 / KCTC 2640 / LMG 13131 / VPI 4355), this protein is UDP-N-acetylglucosamine--N-acetylmuramyl-(pentapeptide) pyrophosphoryl-undecaprenol N-acetylglucosamine transferase.